The following is a 213-amino-acid chain: THAP domain-containing protein 1 (213 aa).

The THAP-type zinc-finger motif lies at 1-81 (MVQSCSAYGC…LKENAVPTIF (81 aa)). The short motif at 134-137 (DHNY) is the HCFC1-binding motif (HBM) element. Positions 139-185 (VEDTMHQRKRIHQLEQQVEKLRKKLKTAQQRCRRQERQLEKLKEVVH) are involved in homodimer formation. A coiled-coil region spans residues 139-190 (VEDTMHQRKRIHQLEQQVEKLRKKLKTAQQRCRRQERQLEKLKEVVHFQKEK).

It belongs to the THAP1 family. Homodimer. Interacts with PAWR. Component of a THAP1/THAP3-HCFC1-OGT complex that contains, either THAP1 or THAP3, HCFC1 and OGT. Interacts with OGT. Interacts (via the HBM) with HCFC1 (via the Kelch-repeat domain); the interaction recruits HCFC1 to the RRM1 promoter. Highly expressed in heart, skeletal muscle, kidney and liver. Weaker expression in brain and placenta.

Its subcellular location is the nucleus. It localises to the nucleoplasm. The protein localises to the PML body. DNA-binding transcription regulator that regulates endothelial cell proliferation and G1/S cell-cycle progression. Specifically binds the 5'-[AT]NTNN[GT]GGCA[AGT]-3' core DNA sequence and acts by modulating expression of pRB-E2F cell-cycle target genes, including RRM1. Component of a THAP1/THAP3-HCFC1-OGT complex that is required for the regulation of the transcriptional activity of RRM1. May also have pro-apoptotic activity by potentiating both serum-withdrawal and TNF-induced apoptosis. This chain is THAP domain-containing protein 1 (THAP1), found in Homo sapiens (Human).